Consider the following 108-residue polypeptide: uncharacterized protein (108 aa).

This sequence belongs to the baculoviridae 11 kDa protein family.

This is an uncharacterized protein from Orgyia pseudotsugata (Douglas-fir tussock moth).